The sequence spans 241 residues: Probable transcriptional regulatory protein FMG_0893 (241 aa).

It belongs to the TACO1 family.

Its subcellular location is the cytoplasm. This Finegoldia magna (strain ATCC 29328 / DSM 20472 / WAL 2508) (Peptostreptococcus magnus) protein is Probable transcriptional regulatory protein FMG_0893.